The sequence spans 525 residues: Cytochrome P450 714A2 (525 aa).

Residues 1 to 3 (MES) are Lumenal-facing. The helical; Signal-anchor for type III membrane protein transmembrane segment at 4–24 (LVVHTVNAIWCIVIVGIFSVG) threads the bilayer. The Cytoplasmic segment spans residues 25–525 (YHVYGRAVVE…PQHGVVIRVV (501 aa)). A heme-binding site is contributed by Cys475.

It belongs to the cytochrome P450 family. It depends on heme as a cofactor. As to expression, expressed in the shoot apical meristem (SAM) and petioles of young leaves, in the leaf margin and petiole vein of cotyledons, and at low levels in the filaments of developing flowers. Not detected in siliques.

The protein resides in the endoplasmic reticulum membrane. Its function is as follows. Involved in the inactivation of early gibberellin (GA) intermediates. This is Cytochrome P450 714A2 (CYP714A2) from Arabidopsis thaliana (Mouse-ear cress).